We begin with the raw amino-acid sequence, 240 residues long: Putative RING finger protein ORF96 (240 aa).

The RING-type 1 zinc finger occupies 9 to 44 (CVVCMEEKPLVVFEPCMHHNCCESCSGHVSNCPYCR). An RING-type 2; degenerate zinc finger spans residues 150-202 (CVICKKEIKEEVGKTYMHACCTATICKPCAKAILKAMVEKEITENLPFCPYCF).

This Ostreid herpesvirus 1 (isolate France) (OsHV-1) protein is Putative RING finger protein ORF96.